A 153-amino-acid chain; its full sequence is Large ribosomal subunit protein uL22 (153 aa).

Residues 110–153 (ITVIVESRPPKQKGASAASARSRRAQGSKAAATKKSAETKEGSE) are disordered. A compositionally biased stretch (basic and acidic residues) spans 144–153 (KSAETKEGSE).

The protein belongs to the universal ribosomal protein uL22 family. In terms of assembly, part of the 50S ribosomal subunit.

Functionally, this protein binds specifically to 23S rRNA; its binding is stimulated by other ribosomal proteins, e.g. L4, L17, and L20. It is important during the early stages of 50S assembly. It makes multiple contacts with different domains of the 23S rRNA in the assembled 50S subunit and ribosome. The globular domain of the protein is located near the polypeptide exit tunnel on the outside of the subunit, while an extended beta-hairpin is found that lines the wall of the exit tunnel in the center of the 70S ribosome. The sequence is that of Large ribosomal subunit protein uL22 from Mycolicibacterium smegmatis (strain ATCC 700084 / mc(2)155) (Mycobacterium smegmatis).